The primary structure comprises 566 residues: Cyclin G (566 aa).

The region spanning 285–368 is the Cyclin N-terminal domain; the sequence is MWYELPSDVL…VIANKLGVQM (84 aa).

The protein belongs to the cyclin family. Cyclin G subfamily. As to quaternary structure, interacts with corto. Interacts with the cyclin-dependent kinases Cdk2 and Cdk4. Interacts with Brca2 and Rad9. Interacts with polycomb protein Asx. Interacts with protein phosphatase 2A subunit wdb.

Its subcellular location is the chromosome. In terms of biological role, cyclin with roles in multiple processes including transcription, meiotic recombination repair, cell cycle regulation, and promotion of normal growth and metabolism. Binds to the promoter region of the homeobox gene Abd-B and is involved in maintaining Abd-B expression in the pupal epithelium. Involved in the transcriptional repression of the homeotic genes Scr and Ubx. Plays a role in meiotic recombination repair of DNA double-strand breaks which ensures efficient translation of grk and promotes grk activity in the oocyte, leading to oocyte dorso-ventral axis formation following secretion of grk from the oocyte and its binding to Egfr in the directly overlying follicle cells. Negatively regulates the binding of serine/threonine-protein kinase Akt1 to the protein phosphatase 2A subunit wdb, promoting normal growth and metabolism. Required for the formation of bilateral symmetry. Negatively regulates cell cycle progression by preventing G1 to S transition and retarding S-phase progression. The chain is Cyclin G from Drosophila melanogaster (Fruit fly).